Reading from the N-terminus, the 391-residue chain is MHVAHLSLVDYRSYPTLELDLRPGTTTFVGLNGQGKTNLVEAIGYVATLGSHRVSGDAPLVRQGAERAVVRAQLERGGRRALVELEITPGKANRARLNGNPVRRTRDVLGVLRTVLFAPEDLALVKGDPGERRRYLDELLVTRWPRIAGVRADYDRILRQRTALLKSAGSAMRSGRADTHTLDVWDEHLATTGAELLSARLALLADLRSPTDSAYRAVSGGQGDLELGYRSSLPLLAEGVATTPGGEAPTRDALREALLASMLEQRKSELDRGVCLVGPHRDDLVLTLGGMPAKGYASHGESWSVALGLRLASYRLLLADDEVDDPGGPVLVLDDVFAELDAGRRERLSEVVADAEQVLVTAAVPEDVPAALRGEHTDRVHVTSGAAVRGD.

30 to 37 (GLNGQGKT) provides a ligand contact to ATP.

This sequence belongs to the RecF family.

The protein resides in the cytoplasm. Its function is as follows. The RecF protein is involved in DNA metabolism; it is required for DNA replication and normal SOS inducibility. RecF binds preferentially to single-stranded, linear DNA. It also seems to bind ATP. This Kineococcus radiotolerans (strain ATCC BAA-149 / DSM 14245 / SRS30216) protein is DNA replication and repair protein RecF.